The following is a 644-amino-acid chain: Macrolide export ATP-binding/permease protein MacB (644 aa).

Positions leucine 6–glycine 244 constitute an ABC transporter domain. Glycine 42–serine 49 contacts ATP. Transmembrane regions (helical) follow at residues alanine 271–glycine 291, glutamate 415–alanine 435, leucine 517–methionine 537, leucine 574–phenylalanine 594, and valine 609–alanine 629.

Belongs to the ABC transporter superfamily. Macrolide exporter (TC 3.A.1.122) family. In terms of assembly, homodimer.

The protein localises to the cell inner membrane. Its function is as follows. Non-canonical ABC transporter that contains transmembrane domains (TMD), which form a pore in the inner membrane, and an ATP-binding domain (NBD), which is responsible for energy generation. Confers resistance against macrolides. In Chromobacterium violaceum (strain ATCC 12472 / DSM 30191 / JCM 1249 / CCUG 213 / NBRC 12614 / NCIMB 9131 / NCTC 9757 / MK), this protein is Macrolide export ATP-binding/permease protein MacB.